Consider the following 519-residue polypeptide: Cytochrome P450 709B1 (519 aa).

A helical transmembrane segment spans residues 1–21 (MGLVIFLALIVLILIIGLRIF). Cysteine 464 provides a ligand contact to heme.

It belongs to the cytochrome P450 family. Heme serves as cofactor. In terms of tissue distribution, highly expressed in siliques.

Its subcellular location is the membrane. Functionally, involved in stress response. Does not function as cytokinin hydroxylase in yeast heterologous system. The sequence is that of Cytochrome P450 709B1 from Arabidopsis thaliana (Mouse-ear cress).